The sequence spans 244 residues: Electron transfer flavoprotein beta subunit lysine methyltransferase homolog (244 aa).

This sequence belongs to the methyltransferase superfamily. ETFBKMT family.

Probable methyltransferase. The polypeptide is Electron transfer flavoprotein beta subunit lysine methyltransferase homolog (Caenorhabditis elegans).